The sequence spans 348 residues: UDP-3-O-acylglucosamine N-acyltransferase (348 aa).

The active-site Proton acceptor is His257.

This sequence belongs to the transferase hexapeptide repeat family. LpxD subfamily. As to quaternary structure, homotrimer.

The catalysed reaction is a UDP-3-O-[(3R)-3-hydroxyacyl]-alpha-D-glucosamine + a (3R)-hydroxyacyl-[ACP] = a UDP-2-N,3-O-bis[(3R)-3-hydroxyacyl]-alpha-D-glucosamine + holo-[ACP] + H(+). It functions in the pathway bacterial outer membrane biogenesis; LPS lipid A biosynthesis. Its function is as follows. Catalyzes the N-acylation of UDP-3-O-acylglucosamine using 3-hydroxyacyl-ACP as the acyl donor. Is involved in the biosynthesis of lipid A, a phosphorylated glycolipid that anchors the lipopolysaccharide to the outer membrane of the cell. The sequence is that of UDP-3-O-acylglucosamine N-acyltransferase from Bartonella quintana (strain Toulouse) (Rochalimaea quintana).